The primary structure comprises 759 residues: LPS-assembly protein LptD (759 aa).

Positions Met1–Ala22 are cleaved as a signal peptide.

The protein belongs to the LptD family. As to quaternary structure, component of the lipopolysaccharide transport and assembly complex. Interacts with LptE and LptA.

It localises to the cell outer membrane. Functionally, together with LptE, is involved in the assembly of lipopolysaccharide (LPS) at the surface of the outer membrane. The protein is LPS-assembly protein LptD of Alcanivorax borkumensis (strain ATCC 700651 / DSM 11573 / NCIMB 13689 / SK2).